The sequence spans 41 residues: MPNSYFPSSVTSLHFIDCSVLELNQIHSNITILSLPNEFNH.

This is an uncharacterized protein from Dictyostelium discoideum (Social amoeba).